The sequence spans 183 residues: Probable GTP-binding protein EngB (183 aa).

The EngB-type G domain maps to 17–183; that stretch reads DYPEVVFVGR…KKELLSRILN (167 aa). GTP-binding positions include 25 to 32, 51 to 55, 69 to 72, 137 to 140, and 166 to 168; these read GRSNVGKS, GRTRA, DVPG, TKID, and SSA. Residues Ser32 and Thr53 each coordinate Mg(2+).

Belongs to the TRAFAC class TrmE-Era-EngA-EngB-Septin-like GTPase superfamily. EngB GTPase family. Mg(2+) serves as cofactor.

Functionally, necessary for normal cell division and for the maintenance of normal septation. This is Probable GTP-binding protein EngB from Aquifex aeolicus (strain VF5).